The following is a 391-amino-acid chain: S-adenosylmethionine synthase 1 (391 aa).

Glutamate 9 is a binding site for Mg(2+). Residue histidine 15 coordinates ATP. Glutamate 43 contacts K(+). The L-methionine site is built by glutamate 56 and glutamine 99. ATP is bound by residues 167 to 169, 235 to 238, aspartate 246, 252 to 253, alanine 269, lysine 273, and lysine 277; these read DGK, SGRF, and RK. L-methionine is bound at residue aspartate 246. Lysine 277 provides a ligand contact to L-methionine.

Belongs to the AdoMet synthase family. As to quaternary structure, homotetramer. It depends on Mn(2+) as a cofactor. Requires Mg(2+) as cofactor. The cofactor is Co(2+). K(+) is required as a cofactor.

It is found in the cytoplasm. The enzyme catalyses L-methionine + ATP + H2O = S-adenosyl-L-methionine + phosphate + diphosphate. It functions in the pathway amino-acid biosynthesis; S-adenosyl-L-methionine biosynthesis; S-adenosyl-L-methionine from L-methionine: step 1/1. Functionally, catalyzes the formation of S-adenosylmethionine from methionine and ATP. The reaction comprises two steps that are both catalyzed by the same enzyme: formation of S-adenosylmethionine (AdoMet) and triphosphate, and subsequent hydrolysis of the triphosphate. This Vitis vinifera (Grape) protein is S-adenosylmethionine synthase 1 (METK1).